The sequence spans 433 residues: L-2-hydroxyglutarate dehydrogenase, mitochondrial (433 aa).

It belongs to the L2HGDH family. It depends on FAD as a cofactor.

It is found in the mitochondrion. It catalyses the reaction (S)-2-hydroxyglutarate + A = 2-oxoglutarate + AH2. The protein is L-2-hydroxyglutarate dehydrogenase, mitochondrial of Caenorhabditis elegans.